We begin with the raw amino-acid sequence, 144 residues long: Transmembrane protein 170A (144 aa).

The Extracellular segment spans residues 1-50; that stretch reads MEREGSGGGGGSAGLLQQILSLKLVPRVGNGTLCPNSTSLCSFPEMWYGV. N30 and N36 each carry an N-linked (GlcNAc...) asparagine glycan. The chain crosses the membrane as a helical span at residues 51–71; it reads FLWALMSSVFFHVPAGLLALF. At 72 to 85 the chain is on the cytoplasmic side; sequence TLRHHKYGRFMSVS. The chain crosses the membrane as a helical span at residues 86 to 106; the sequence is ILLMGIVGPITAGILTSAAIA. Residues 107–116 are Extracellular-facing; it reads GVYRAAGKEM. Residues 117–137 traverse the membrane as a helical segment; sequence IPFEALTLGTGQTFCVVVVSF. Residues 138–144 are Cytoplasmic-facing; that stretch reads LRVLATL.

Belongs to the TMEM170 family. In terms of assembly, interacts with RTN4.

Its subcellular location is the endoplasmic reticulum membrane. It is found in the nucleus envelope. Functionally, acts as a regulator of endoplasmic reticulum (ER) and nuclear envelope (NE) morphogenesis. Affects the ratio between tubular ER and ER sheets by promoting sheet formation at the expense of tubules. Influences NE expansion, nuclear pore complex formation and proper localization of inner nuclear membrane proteins. In Mus musculus (Mouse), this protein is Transmembrane protein 170A (Tmem170a).